Reading from the N-terminus, the 239-residue chain is Homeobox-leucine zipper protein HOX12 (239 aa).

Residues 25–65 (ATSGGEQKKARQRRRRKVKPEAAAALAGESGGDEQAKKRRL) are disordered. Positions 58–117 (EQAKKRRLSDEQARFLEMSFKKERKLETPRKVQLAAELGLDAKQVAVWFQNRRARHKSKL) form a DNA-binding region, homeobox. The stretch at 107 to 168 (QNRRARHKSK…KLAAVAAATT (62 aa)) forms a coiled coil.

Belongs to the HD-ZIP homeobox family. Class I subfamily. As to expression, expressed in seedlings, roots, stems, leaf sheaths and panicles.

It is found in the nucleus. Functionally, probable transcription factor. This Oryza sativa subsp. japonica (Rice) protein is Homeobox-leucine zipper protein HOX12 (HOX12).